Consider the following 541-residue polypeptide: 2-hydroxyacylsphingosine 1-beta-galactosyltransferase (541 aa).

An N-terminal signal peptide occupies residues 1–20 (MKSYTPYFMLLWSAVGIARA). Residues Asn-78, Asn-333, and Asn-442 are each glycosylated (N-linked (GlcNAc...) asparagine). Residues 472 to 492 (YFLLDIAFVLLLGAVLLYFIL) traverse the membrane as a helical segment. The segment at 518–541 (HYQNGIRNGKYKGNGRVKHEKKVR) is disordered. Basic residues predominate over residues 526-541 (GKYKGNGRVKHEKKVR).

The protein belongs to the UDP-glycosyltransferase family.

The protein resides in the membrane. Its subcellular location is the endoplasmic reticulum. It carries out the reaction an N-acylsphing-4-enine + UDP-alpha-D-galactose = a beta-D-galactosyl-(1&lt;-&gt;1')-N-acylsphing-4-enine + UDP + H(+). The catalysed reaction is N-(2-hydroxy-hexanoyl)-sphing-4-enine + UDP-alpha-D-galactose = N-(2-hydroxy-hexanoyl)-beta-D-galactosyl-sphing-4-enine + UDP + H(+). It catalyses the reaction N-(2-hydroxy-hexanoyl)-sphinganine + UDP-alpha-D-galactose = N-(2-hydroxyhexanoyl)-beta-D-galactosylsphinganine + UDP + H(+). The enzyme catalyses an N-acyl-sphingoid base + UDP-alpha-D-galactose = a D-galactosylceramide + UDP + H(+). It functions in the pathway sphingolipid metabolism; galactosylceramide biosynthesis. In terms of biological role, catalyzes the transfer of galactose to ceramide, a key enzymatic step in the biosynthesis of galactocerebrosides, which are abundant sphingolipids of the myelin membrane of the central nervous system and peripheral nervous system. Galactosylates both hydroxy- and non-hydroxy fatty acid-containing ceramides and diglycerides. This chain is 2-hydroxyacylsphingosine 1-beta-galactosyltransferase, found in Mus musculus (Mouse).